The following is a 146-amino-acid chain: Deoxyuridine 5'-triphosphate nucleotidohydrolase (146 aa).

Residues 66–68, asparagine 79, and 83–85 contribute to the substrate site; these read RSG and TID.

It belongs to the dUTPase family. It depends on Mg(2+) as a cofactor.

The enzyme catalyses dUTP + H2O = dUMP + diphosphate + H(+). It functions in the pathway pyrimidine metabolism; dUMP biosynthesis; dUMP from dCTP (dUTP route): step 2/2. Functionally, this enzyme is involved in nucleotide metabolism: it produces dUMP, the immediate precursor of thymidine nucleotides and it decreases the intracellular concentration of dUTP so that uracil cannot be incorporated into DNA. The sequence is that of Deoxyuridine 5'-triphosphate nucleotidohydrolase from Citrifermentans bemidjiense (strain ATCC BAA-1014 / DSM 16622 / JCM 12645 / Bem) (Geobacter bemidjiensis).